Reading from the N-terminus, the 762-residue chain is 5-methyltetrahydropteroyltriglutamate--homocysteine methyltransferase (762 aa).

5-methyltetrahydropteroyltri-L-glutamate contacts are provided by residues 17–20 (REWK) and K111. Residues 435-437 (IGS) and E488 each bind L-homocysteine. L-methionine is bound by residues 435-437 (IGS) and E488. 5-methyltetrahydropteroyltri-L-glutamate contacts are provided by residues 519 to 520 (RC) and W565. D603 lines the L-homocysteine pocket. D603 contacts L-methionine. E609 provides a ligand contact to 5-methyltetrahydropteroyltri-L-glutamate. Residues H645, C647, and E669 each contribute to the Zn(2+) site. Catalysis depends on H698, which acts as the Proton donor. Residue C730 coordinates Zn(2+).

This sequence belongs to the vitamin-B12 independent methionine synthase family. Zn(2+) is required as a cofactor.

It catalyses the reaction 5-methyltetrahydropteroyltri-L-glutamate + L-homocysteine = tetrahydropteroyltri-L-glutamate + L-methionine. It functions in the pathway amino-acid biosynthesis; L-methionine biosynthesis via de novo pathway; L-methionine from L-homocysteine (MetE route): step 1/1. Functionally, catalyzes the transfer of a methyl group from 5-methyltetrahydrofolate to homocysteine resulting in methionine formation. In Bacillus thuringiensis subsp. konkukian (strain 97-27), this protein is 5-methyltetrahydropteroyltriglutamate--homocysteine methyltransferase.